Here is a 666-residue protein sequence, read N- to C-terminus: Long chain acyl-CoA synthetase 4 (666 aa).

228 to 239 contributes to the ATP binding site; it reads IMYTSGTTGDPK. The segment at 495 to 519 is fatty acid-binding; that stretch reads DGWLHTGDVGEWQPDGSMKIIDRKK.

The protein belongs to the ATP-dependent AMP-binding enzyme family. Requires Mg(2+) as cofactor.

It catalyses the reaction a long-chain fatty acid + ATP + CoA = a long-chain fatty acyl-CoA + AMP + diphosphate. The protein operates within lipid metabolism; fatty acid metabolism. In terms of biological role, activation of long-chain fatty acids for both synthesis of cellular lipids, and degradation via beta-oxidation. Preferentially uses palmitate, palmitoleate, oleate and linoleate. The protein is Long chain acyl-CoA synthetase 4 (LACS4) of Arabidopsis thaliana (Mouse-ear cress).